Consider the following 310-residue polypeptide: Methionyl-tRNA formyltransferase (310 aa).

(6S)-5,6,7,8-tetrahydrofolate is bound at residue 110–113 (SLLP).

This sequence belongs to the Fmt family.

It carries out the reaction L-methionyl-tRNA(fMet) + (6R)-10-formyltetrahydrofolate = N-formyl-L-methionyl-tRNA(fMet) + (6S)-5,6,7,8-tetrahydrofolate + H(+). Functionally, attaches a formyl group to the free amino group of methionyl-tRNA(fMet). The formyl group appears to play a dual role in the initiator identity of N-formylmethionyl-tRNA by promoting its recognition by IF2 and preventing the misappropriation of this tRNA by the elongation apparatus. The protein is Methionyl-tRNA formyltransferase of Streptomyces avermitilis (strain ATCC 31267 / DSM 46492 / JCM 5070 / NBRC 14893 / NCIMB 12804 / NRRL 8165 / MA-4680).